We begin with the raw amino-acid sequence, 200 residues long: NADH-quinone oxidoreductase chain 10 (200 aa).

The next 5 membrane-spanning stretches (helical) occupy residues 2–22 (MTFA…MVVI), 26–46 (PVHS…LFVL), 51–71 (FVAM…FLFV), 90–110 (LPLA…AFSG), and 144–164 (VLMF…AIVL).

It belongs to the complex I subunit 6 family. NDH-1 is composed of at least 14 different subunits, Nqo1 to Nqo14. The complex has a L-shaped structure, with the hydrophobic arm (subunits Nqo7, Nqo8, Nqo10 to Nqo14) embedded in the inner membrane and the hydrophilic peripheral arm (subunits Nqo1 to Nqo6, Nqo9) protruding into the bacterial cytoplasm. The hydrophilic domain contains all the redox centers.

The protein localises to the cell inner membrane. It catalyses the reaction a quinone + NADH + 5 H(+)(in) = a quinol + NAD(+) + 4 H(+)(out). Its function is as follows. NDH-1 shuttles electrons from NADH, via FMN and iron-sulfur (Fe-S) centers, to quinones in the respiratory chain. The immediate electron acceptor for the enzyme in this species is believed to be ubiquinone. Couples the redox reaction to proton translocation (for every two electrons transferred, four hydrogen ions are translocated across the cytoplasmic membrane), and thus conserves the redox energy in a proton gradient. This chain is NADH-quinone oxidoreductase chain 10, found in Paracoccus denitrificans.